The chain runs to 1145 residues: Error-prone DNA polymerase (1145 aa).

The protein belongs to the DNA polymerase type-C family. DnaE2 subfamily.

It is found in the cytoplasm. The catalysed reaction is DNA(n) + a 2'-deoxyribonucleoside 5'-triphosphate = DNA(n+1) + diphosphate. Functionally, DNA polymerase involved in damage-induced mutagenesis and translesion synthesis (TLS). It is not the major replicative DNA polymerase. This chain is Error-prone DNA polymerase, found in Rhodopirellula baltica (strain DSM 10527 / NCIMB 13988 / SH1).